We begin with the raw amino-acid sequence, 591 residues long: CTP synthase 1-B (591 aa).

In terms of domain architecture, Glutamine amidotransferase type-1 spans 300–554; the sequence is SIALVGKYTK…LASVGRLSQY (255 aa). Residues Cys399, His526, and Glu528 each act as for GATase activity in the active site. Residues 562-572 show a composition bias toward basic and acidic residues; it reads SPRDTYSDRSE. The disordered stretch occupies residues 562-581; sequence SPRDTYSDRSENSSPDAEIA.

Belongs to the CTP synthase family.

The catalysed reaction is UTP + L-glutamine + ATP + H2O = CTP + L-glutamate + ADP + phosphate + 2 H(+). Its pathway is pyrimidine metabolism; CTP biosynthesis via de novo pathway; CTP from UDP: step 2/2. Its function is as follows. This enzyme is involved in the de novo synthesis of CTP, a precursor of DNA, RNA and phospholipids. Catalyzes the ATP-dependent amination of UTP to CTP with either L-glutamine or ammonia as a source of nitrogen. This is CTP synthase 1-B (ctps1-b) from Xenopus laevis (African clawed frog).